The sequence spans 409 residues: Probable aspartate/prephenate aminotransferase (409 aa).

Residues Gly39, Trp125, and Asn175 each coordinate L-aspartate. N6-(pyridoxal phosphate)lysine is present on Lys239. Arg375 serves as a coordination point for L-aspartate.

It belongs to the class-I pyridoxal-phosphate-dependent aminotransferase family. In terms of assembly, homodimer. The cofactor is pyridoxal 5'-phosphate.

Its subcellular location is the cytoplasm. It catalyses the reaction L-aspartate + 2-oxoglutarate = oxaloacetate + L-glutamate. The catalysed reaction is L-arogenate + 2-oxoglutarate = prephenate + L-glutamate. Catalyzes the reversible conversion of aspartate and 2-oxoglutarate to glutamate and oxaloacetate. Can also transaminate prephenate in the presence of glutamate. The protein is Probable aspartate/prephenate aminotransferase (aatA) of Rickettsia felis (strain ATCC VR-1525 / URRWXCal2) (Rickettsia azadi).